The following is a 100-amino-acid chain: Large ribosomal subunit protein uL23 (100 aa).

It belongs to the universal ribosomal protein uL23 family. Part of the 50S ribosomal subunit. Contacts protein L29, and trigger factor when it is bound to the ribosome.

One of the early assembly proteins it binds 23S rRNA. One of the proteins that surrounds the polypeptide exit tunnel on the outside of the ribosome. Forms the main docking site for trigger factor binding to the ribosome. The protein is Large ribosomal subunit protein uL23 of Buchnera aphidicola subsp. Baizongia pistaciae (strain Bp).